Here is a 60-residue protein sequence, read N- to C-terminus: Potassium channel toxin ImKTx88 (60 aa).

A signal peptide spans 1 to 22 (MSNFSVFLIALLFCSVFILSEA). 3 disulfide bridges follow: Cys-30/Cys-51, Cys-36/Cys-56, and Cys-40/Cys-58.

This sequence belongs to the short scorpion toxin superfamily. Potassium channel inhibitor family. In terms of tissue distribution, expressed by the venom gland.

The protein localises to the secreted. Functionally, recombinant toxin selectively inhibits Kv1.3/KCNA3 potassium channels with an IC(50) of 91 pM. In Isometrus maculatus (Lesser brown scorpion), this protein is Potassium channel toxin ImKTx88.